Here is a 292-residue protein sequence, read N- to C-terminus: Aspartate carbamoyltransferase catalytic subunit (292 aa).

Residues Arg50 and Thr51 each contribute to the carbamoyl phosphate site. Lys78 is a binding site for L-aspartate. Carbamoyl phosphate-binding residues include Arg100, His128, and Gln131. Arg161 and Arg211 together coordinate L-aspartate. Residues Gly250 and Pro251 each contribute to the carbamoyl phosphate site.

The protein belongs to the aspartate/ornithine carbamoyltransferase superfamily. ATCase family. In terms of assembly, heterododecamer (2C3:3R2) of six catalytic PyrB chains organized as two trimers (C3), and six regulatory PyrI chains organized as three dimers (R2).

The catalysed reaction is carbamoyl phosphate + L-aspartate = N-carbamoyl-L-aspartate + phosphate + H(+). Its pathway is pyrimidine metabolism; UMP biosynthesis via de novo pathway; (S)-dihydroorotate from bicarbonate: step 2/3. Functionally, catalyzes the condensation of carbamoyl phosphate and aspartate to form carbamoyl aspartate and inorganic phosphate, the committed step in the de novo pyrimidine nucleotide biosynthesis pathway. This Nitratiruptor sp. (strain SB155-2) protein is Aspartate carbamoyltransferase catalytic subunit.